Consider the following 279-residue polypeptide: Ribonuclease T2 protein rnst-2 (279 aa).

An N-terminal signal peptide occupies residues 1–17 (MKLLLLLCISCIPLAYS). Cysteines 37 and 48 form a disulfide. Residue His60 is part of the active site. Residue Asn68 is glycosylated (N-linked (GlcNAc...) asparagine). Active-site residues include Glu114 and His118. Cys200 and Cys210 form a disulfide bridge.

It belongs to the RNase T2 family. As to expression, expressed in the pharynx, hypodermis, muscle cells, sheath cells, intestinal cells, the vulva and tail regions.

The protein resides in the lysosome. It catalyses the reaction a ribonucleotidyl-ribonucleotide-RNA + H2O = a 3'-end 3'-phospho-ribonucleotide-RNA + a 5'-end dephospho-ribonucleoside-RNA + H(+). Its function is as follows. Probable endoribonuclease involved in the autophagy-mediated degradation of ribosomal RNA and ribosomal proteins in lysosomes. The polypeptide is Ribonuclease T2 protein rnst-2 (Caenorhabditis elegans).